Consider the following 874-residue polypeptide: Bifunctional apolipoprotein N-acyltransferase/polyprenol monophosphomannose synthase (874 aa).

Positions 1-593 are apolipoprotein N-acyltransferase; that stretch reads MKLGAWVAAQ…GRHRATSRSY (593 aa). Helical transmembrane passes span 23–42, 72–89, 94–115, 177–194, and 206–223; these read TRLV…FPPR, YGLL…PWIG, PGPW…GLFA, VALV…IEKW, and AVVL…AAIV. A CN hydrolase domain is found at 241 to 497; that stretch reads VTVAVVQGNV…PAYLDSQVRL (257 aa). The Proton acceptor role is filled by glutamate 294. Lysine 359 is an active-site residue. Cysteine 409 acts as the Nucleophile in catalysis. Residues 509–526 traverse the membrane as a helical segment; sequence PILQWILVGAAAAVVLVA. Disordered stretches follow at residues 533-609 and 852-874; these read FPRP…NRPS and RARP…DVTE. Residues 594–874 form a polyprenol monophosphomannose synthase region; that stretch reads MTTGQPAPPA…SRVSRADVTE (281 aa).

The protein in the N-terminal section; belongs to the CN hydrolase family. Apolipoprotein N-acyltransferase subfamily. It in the C-terminal section; belongs to the glycosyltransferase 2 family.

The protein localises to the cell membrane. It catalyses the reaction N-terminal S-1,2-diacyl-sn-glyceryl-L-cysteinyl-[lipoprotein] + a glycerophospholipid = N-acyl-S-1,2-diacyl-sn-glyceryl-L-cysteinyl-[lipoprotein] + a 2-acyl-sn-glycero-3-phospholipid + H(+). It carries out the reaction a di-trans,poly-cis-dolichyl phosphate + GDP-alpha-D-mannose = a di-trans,poly-cis-dolichyl beta-D-mannosyl phosphate + GDP. Its pathway is protein modification; lipoprotein biosynthesis (N-acyl transfer). Its function is as follows. Catalyzes the phospholipid dependent N-acylation of the N-terminal cysteine of apolipoprotein, the last step in lipoprotein maturation. In terms of biological role, transfers mannose from GDP-mannose to lipid acceptors to form polyprenol monophosphomannose (PPM). PMM is an alkai-stable sugar donor which adds mannose-phosphate residues to triacylated-phosphatidyl-myo-inositol mannosides (PIM2), eventually leading to generation of the cell wall glycolipid lipoglycan modulins lipoarabinomannan (LAM) and lipomannan (LM). The protein is Bifunctional apolipoprotein N-acyltransferase/polyprenol monophosphomannose synthase of Mycobacterium bovis (strain BCG / Pasteur 1173P2).